A 208-amino-acid chain; its full sequence is Interleukin-6 (208 aa).

An N-terminal signal peptide occupies residues 1-29 (MNSRFTSAFTPFAVSLGLLLVMTSAFPTP). Asparagine 38 carries N-linked (GlcNAc...) asparagine glycosylation. Cysteine 72 and cysteine 78 form a disulfide bridge. Serine 81 is subject to Phosphoserine. Cysteine 101 and cysteine 111 are disulfide-bonded.

The protein belongs to the IL-6 superfamily. In terms of assembly, component of a hexamer of two molecules each of IL6, IL6R and IL6ST; first binds to IL6R to associate with the signaling subunit IL6ST. Interacts with IL6R (via the N-terminal ectodomain); this interaction may be affected by IL6R-binding with SORL1, hence decreasing IL6 cis signaling. Interacts with SORL1 (via the N-terminal ectodomain); this interaction leads to IL6 internalization and lysosomal degradation. May form a trimeric complex with the soluble SORL1 ectodomain and soluble IL6R receptor; this interaction might stabilize circulating IL6, hence promoting IL6 trans signaling.

Its subcellular location is the secreted. In terms of biological role, cytokine with a wide variety of biological functions in immunity, tissue regeneration, and metabolism. Binds to IL6R, then the complex associates to the signaling subunit IL6ST/gp130 to trigger the intracellular IL6-signaling pathway. The interaction with the membrane-bound IL6R and IL6ST stimulates 'classic signaling', whereas the binding of IL6 and soluble IL6R to IL6ST stimulates 'trans-signaling'. Alternatively, 'cluster signaling' occurs when membrane-bound IL6:IL6R complexes on transmitter cells activate IL6ST receptors on neighboring receiver cells. IL6 is a potent inducer of the acute phase response. Rapid production of IL6 contributes to host defense during infection and tissue injury, but excessive IL6 synthesis is involved in disease pathology. In the innate immune response, is synthesized by myeloid cells, such as macrophages and dendritic cells, upon recognition of pathogens through toll-like receptors (TLRs) at the site of infection or tissue injury. In the adaptive immune response, is required for the differentiation of B cells into immunoglobulin-secreting cells. Plays a major role in the differentiation of CD4(+) T cell subsets. Essential factor for the development of T follicular helper (Tfh) cells that are required for the induction of germinal-center formation. Required to drive naive CD4(+) T cells to the Th17 lineage. Also required for proliferation of myeloma cells and the survival of plasmablast cells. Functionally, acts as an essential factor in bone homeostasis and on vessels directly or indirectly by induction of VEGF, resulting in increased angiogenesis activity and vascular permeability. Induces, through 'trans-signaling' and synergistically with IL1B and TNF, the production of VEGF. Involved in metabolic controls, is discharged into the bloodstream after muscle contraction increasing lipolysis and improving insulin resistance. 'Trans-signaling' in central nervous system also regulates energy and glucose homeostasis. Mediates, through GLP-1, crosstalk between insulin-sensitive tissues, intestinal L cells and pancreatic islets to adapt to changes in insulin demand. Also acts as a myokine. Plays a protective role during liver injury, being required for maintenance of tissue regeneration. Also has a pivotal role in iron metabolism by regulating HAMP/hepcidin expression upon inflammation or bacterial infection. Through activation of IL6ST-YAP-NOTCH pathway, induces inflammation-induced epithelial regeneration. In Bubalus bubalis (Domestic water buffalo), this protein is Interleukin-6 (IL6).